Here is a 306-residue protein sequence, read N- to C-terminus: Serine/threonine-protein kinase mug51 (306 aa).

The protein belongs to the STK19 family.

The enzyme catalyses L-seryl-[protein] + ATP = O-phospho-L-seryl-[protein] + ADP + H(+). It catalyses the reaction L-threonyl-[protein] + ATP = O-phospho-L-threonyl-[protein] + ADP + H(+). In terms of biological role, serine/threonine-protein kinase. Has a role in meiosis. In Schizosaccharomyces pombe (strain 972 / ATCC 24843) (Fission yeast), this protein is Serine/threonine-protein kinase mug51 (mug51).